We begin with the raw amino-acid sequence, 426 residues long: Enolase (426 aa).

(2R)-2-phosphoglycerate is bound at residue Gln163. Glu205 serves as the catalytic Proton donor. Mg(2+) contacts are provided by Asp242, Glu285, and Asp312. Residues Lys337, Arg366, Ser367, and Lys388 each contribute to the (2R)-2-phosphoglycerate site. Lys337 acts as the Proton acceptor in catalysis.

Belongs to the enolase family. Mg(2+) serves as cofactor.

It localises to the cytoplasm. The protein resides in the secreted. It is found in the cell surface. The catalysed reaction is (2R)-2-phosphoglycerate = phosphoenolpyruvate + H2O. It participates in carbohydrate degradation; glycolysis; pyruvate from D-glyceraldehyde 3-phosphate: step 4/5. Functionally, catalyzes the reversible conversion of 2-phosphoglycerate (2-PG) into phosphoenolpyruvate (PEP). It is essential for the degradation of carbohydrates via glycolysis. This is Enolase from Caulobacter vibrioides (strain ATCC 19089 / CIP 103742 / CB 15) (Caulobacter crescentus).